The primary structure comprises 343 residues: Dihydroorotase (343 aa).

The Zn(2+) site is built by His-14 and His-16. Substrate is bound by residues 16–18 (HLR) and Asn-42. Residues Lys-100, His-137, and His-175 each coordinate Zn(2+). At Lys-100 the chain carries N6-carboxylysine. Residue His-137 coordinates substrate. Leu-220 contacts substrate. Asp-248 contacts Zn(2+). Asp-248 is an active-site residue. His-252 and Ala-264 together coordinate substrate.

Belongs to the metallo-dependent hydrolases superfamily. DHOase family. Class II DHOase subfamily. In terms of assembly, homodimer. The cofactor is Zn(2+).

The enzyme catalyses (S)-dihydroorotate + H2O = N-carbamoyl-L-aspartate + H(+). It functions in the pathway pyrimidine metabolism; UMP biosynthesis via de novo pathway; (S)-dihydroorotate from bicarbonate: step 3/3. Functionally, catalyzes the reversible cyclization of carbamoyl aspartate to dihydroorotate. This Synechococcus sp. (strain CC9902) protein is Dihydroorotase.